Reading from the N-terminus, the 465-residue chain is Neutrophil collagenase (465 aa).

An N-terminal signal peptide occupies residues 1 to 20; sequence MFRLKTLPLLIFLHTQLANA. A propeptide spans 21–100 (activation peptide); that stretch reads FPVPEHLEEK…CGVPDSGDFL (80 aa). N55 is a glycosylation site (N-linked (GlcNAc...) asparagine). The Cysteine switch motif lies at 89–96; it reads PRCGVPDS. C91 is a Zn(2+) binding site. An N-linked (GlcNAc...) asparagine glycan is attached at N112. D157 is a binding site for Ca(2+). Zn(2+)-binding residues include H167 and D169. Residues D174, G175, N177, and I179 each contribute to the Ca(2+) site. H182 is a binding site for Zn(2+). Ca(2+) contacts are provided by G189, G191, and D193. H195 provides a ligand contact to Zn(2+). Ca(2+)-binding residues include D197 and E200. H217 contacts Zn(2+). The active site involves E218. Positions 221 and 227 each coordinate Zn(2+). Hemopexin repeat units follow at residues 276–325, 326–372, 374–420, and 421–464; these read PKAC…WPFL, PNGL…GFPR, VQAI…FPGV, and NCRV…WLNC. The cysteines at positions 279 and 464 are disulfide-linked. D286 is a binding site for Ca(2+). Ca(2+) is bound by residues D378 and D425.

The protein belongs to the peptidase M10A family. The cofactor is Ca(2+). Zn(2+) is required as a cofactor. As to expression, neutrophils. Expressed in uterus. Low levels in kidney and muscle.

The protein resides in the cytoplasmic granule. It localises to the secreted. Its subcellular location is the extracellular space. The protein localises to the extracellular matrix. The catalysed reaction is Cleavage of interstitial collagens in the triple helical domain. Unlike EC 3.4.24.7, this enzyme cleaves type III collagen more slowly than type I.. Cannot be activated without removal of the activation peptide. Activated by matrilysin. Functionally, can degrade fibrillar type I, II, and III collagens. May play a role in the degradation of collagen fibers during uterine involution. In Mus musculus (Mouse), this protein is Neutrophil collagenase (Mmp8).